Reading from the N-terminus, the 250-residue chain is Cytochrome c oxidase subunit 2 (250 aa).

The Mitochondrial intermembrane segment spans residues 1 to 39 (MFFLINKLVMNFDAPSPWGIYFQDSATPQMEGLNELHDN). Residues 40-60 (IMYYLVVILFAVGWILLSIVI) form a helical membrane-spanning segment. At 61–81 (NYVSTKSPISHKYLNHGTLIE) the chain is on the mitochondrial matrix side. Residues 82 to 104 (LIWTITPAVILILIAFPSFKLLY) traverse the membrane as a helical segment. The Mitochondrial intermembrane portion of the chain corresponds to 105-250 (LMDEVSDPSM…EKFLIWLKEQ (146 aa)). Cu cation contacts are provided by His-185, Cys-220, Glu-222, Cys-224, His-228, and Met-231. Glu-222 lines the Mg(2+) pocket.

It belongs to the cytochrome c oxidase subunit 2 family. Component of the cytochrome c oxidase (complex IV, CIV), a multisubunit enzyme composed of a catalytic core of 3 subunits and several supernumerary subunits. The complex exists as a monomer or a dimer and forms supercomplexes (SCs) in the inner mitochondrial membrane with ubiquinol-cytochrome c oxidoreductase (cytochrome b-c1 complex, complex III, CIII). The cofactor is Cu cation.

The protein localises to the mitochondrion inner membrane. It catalyses the reaction 4 Fe(II)-[cytochrome c] + O2 + 8 H(+)(in) = 4 Fe(III)-[cytochrome c] + 2 H2O + 4 H(+)(out). Its function is as follows. Component of the cytochrome c oxidase, the last enzyme in the mitochondrial electron transport chain which drives oxidative phosphorylation. The respiratory chain contains 3 multisubunit complexes succinate dehydrogenase (complex II, CII), ubiquinol-cytochrome c oxidoreductase (cytochrome b-c1 complex, complex III, CIII) and cytochrome c oxidase (complex IV, CIV), that cooperate to transfer electrons derived from NADH and succinate to molecular oxygen, creating an electrochemical gradient over the inner membrane that drives transmembrane transport and the ATP synthase. Cytochrome c oxidase is the component of the respiratory chain that catalyzes the reduction of oxygen to water. Electrons originating from reduced cytochrome c in the intermembrane space (IMS) are transferred via the dinuclear copper A center (CU(A)) of subunit 2 and heme A of subunit 1 to the active site in subunit 1, a binuclear center (BNC) formed by heme A3 and copper B (CU(B)). The BNC reduces molecular oxygen to 2 water molecules using 4 electrons from cytochrome c in the IMS and 4 protons from the mitochondrial matrix. The chain is Cytochrome c oxidase subunit 2 (COII) from Podospora anserina (strain S / ATCC MYA-4624 / DSM 980 / FGSC 10383) (Pleurage anserina).